A 151-amino-acid chain; its full sequence is Methylglyoxal synthase (151 aa).

Residues 6–151 (RVMPAHKHIA…DYDAYLAERV (146 aa)) enclose the MGS-like domain. Substrate is bound by residues His-19, Lys-23, 45-48 (TGTT), and 65-66 (SG). Asp-71 (proton donor/acceptor) is an active-site residue. Residue His-98 coordinates substrate.

It belongs to the methylglyoxal synthase family.

The catalysed reaction is dihydroxyacetone phosphate = methylglyoxal + phosphate. In terms of biological role, catalyzes the formation of methylglyoxal from dihydroxyacetone phosphate. The protein is Methylglyoxal synthase of Aliivibrio fischeri (strain MJ11) (Vibrio fischeri).